The primary structure comprises 61 residues: Sec-independent protein translocase protein TatA (61 aa).

Residues 1–21 (MFGLGITEILLILGIIILIFG) traverse the membrane as a helical segment.

The protein belongs to the TatA/E family. In terms of assembly, the Tat system comprises two distinct complexes: a TatABC complex, containing multiple copies of TatA, TatB and TatC subunits, and a separate TatA complex, containing only TatA subunits. Substrates initially bind to the TatABC complex, which probably triggers association of the separate TatA complex to form the active translocon.

It is found in the cell inner membrane. Functionally, part of the twin-arginine translocation (Tat) system that transports large folded proteins containing a characteristic twin-arginine motif in their signal peptide across membranes. TatA could form the protein-conducting channel of the Tat system. The chain is Sec-independent protein translocase protein TatA from Maridesulfovibrio salexigens (strain ATCC 14822 / DSM 2638 / NCIMB 8403 / VKM B-1763) (Desulfovibrio salexigens).